A 316-amino-acid chain; its full sequence is Phosducin-like protein 1 (316 aa).

Residues 1–61 (MEQNILNSIL…EDGDKEYEVD (61 aa)) are disordered. Residues 12–41 (KFGDGDQERSDIRHNDSGDENDNHSDHEGN) are compositionally biased toward basic and acidic residues. The segment covering 49-61 (EGNEDGDKEYEVD) has biased composition (acidic residues). The 196-residue stretch at 95–290 (SDYAEHREKQ…LLSSYDIIPN (196 aa)) folds into the Phosducin domain. Positions 102–156 (EKQKQKYLQKKYETQKMLEKMCFTTRDQPPPTEEENQLDSDDDDLERIRKARMEQ) form a coiled coil. Residues 175 to 316 (FGYFKQIDSS…RPESDDDNDD (142 aa)) are thioredoxin fold. The segment at 293-316 (KAKNSNWETSLSRKRPESDDDNDD) is disordered.

The protein belongs to the phosducin family.

It is found in the cytoplasm. Functionally, required for normal chemotaxis in response to cAMP and folate. Required for the heterodimerization of the G protein beta and gamma subunits gpbA and gpgA, which is itself thought to be necessary for prenylation of the gamma subunit gpgA and its association with plasma membranes. The chain is Phosducin-like protein 1 (phlp1) from Dictyostelium discoideum (Social amoeba).